The chain runs to 475 residues: Siroheme synthase (475 aa).

Residues 1–204 (MDYLPVFLNI…GRDQAAQDYL (204 aa)) form a precorrin-2 dehydrogenase /sirohydrochlorin ferrochelatase region. Residues 22-23 (EI) and 43-44 (PA) contribute to the NAD(+) site. Serine 129 is subject to Phosphoserine. A uroporphyrinogen-III C-methyltransferase region spans residues 218–475 (GEVYLVGAGP…MGTSSGPGYP (258 aa)). Proline 227 lines the S-adenosyl-L-methionine pocket. Aspartate 250 acts as the Proton acceptor in catalysis. Catalysis depends on lysine 272, which acts as the Proton donor. S-adenosyl-L-methionine is bound by residues 303–305 (GGD), isoleucine 308, 333–334 (TA), methionine 385, and glycine 414.

This sequence in the N-terminal section; belongs to the precorrin-2 dehydrogenase / sirohydrochlorin ferrochelatase family. In the C-terminal section; belongs to the precorrin methyltransferase family.

The catalysed reaction is uroporphyrinogen III + 2 S-adenosyl-L-methionine = precorrin-2 + 2 S-adenosyl-L-homocysteine + H(+). It catalyses the reaction precorrin-2 + NAD(+) = sirohydrochlorin + NADH + 2 H(+). It carries out the reaction siroheme + 2 H(+) = sirohydrochlorin + Fe(2+). It participates in cofactor biosynthesis; adenosylcobalamin biosynthesis; precorrin-2 from uroporphyrinogen III: step 1/1. Its pathway is cofactor biosynthesis; adenosylcobalamin biosynthesis; sirohydrochlorin from precorrin-2: step 1/1. It functions in the pathway porphyrin-containing compound metabolism; siroheme biosynthesis; precorrin-2 from uroporphyrinogen III: step 1/1. The protein operates within porphyrin-containing compound metabolism; siroheme biosynthesis; siroheme from sirohydrochlorin: step 1/1. It participates in porphyrin-containing compound metabolism; siroheme biosynthesis; sirohydrochlorin from precorrin-2: step 1/1. In terms of biological role, multifunctional enzyme that catalyzes the SAM-dependent methylations of uroporphyrinogen III at position C-2 and C-7 to form precorrin-2 via precorrin-1. Then it catalyzes the NAD-dependent ring dehydrogenation of precorrin-2 to yield sirohydrochlorin. Finally, it catalyzes the ferrochelation of sirohydrochlorin to yield siroheme. This chain is Siroheme synthase, found in Nitrosomonas europaea (strain ATCC 19718 / CIP 103999 / KCTC 2705 / NBRC 14298).